Here is a 181-residue protein sequence, read N- to C-terminus: Acetylcholinesterase (181 aa).

The active-site Acyl-ester intermediate is the S76. Catalysis depends on E132, which acts as the Charge relay system. The interval 162 to 181 (WQDQDNGGLPLTGNPTXPHN) is disordered.

The protein belongs to the type-B carboxylesterase/lipase family. Post-translationally, the N-terminus is blocked. Expressed by the venom gland. Is also probably expressed by liver and muscle.

It is found in the synapse. It localises to the secreted. Its subcellular location is the cell membrane. It catalyses the reaction acetylcholine + H2O = choline + acetate + H(+). In venom, its toxic role is unclear: it could result in less musculatory control by rapidly hydrolyzing acetylcholine, or that it works synergistically with alkaline phosphatase (ALP) in paralyzing prey through hypotension. In muscle, it terminates signal transduction at the neuromuscular junction by rapid hydrolysis of the acetylcholine released into the synaptic cleft. In liver, its function is unclear: it could serve as a safeguard against any diffusion of acetylcholine from synapses into the circulation. The sequence is that of Acetylcholinesterase (ACHE) from Naja oxiana (Central Asian cobra).